Reading from the N-terminus, the 286-residue chain is Bifunctional protein FolD (286 aa).

NADP(+) contacts are provided by residues 166–168 and Ile-232; that span reads GAS.

This sequence belongs to the tetrahydrofolate dehydrogenase/cyclohydrolase family. Homodimer.

The enzyme catalyses (6R)-5,10-methylene-5,6,7,8-tetrahydrofolate + NADP(+) = (6R)-5,10-methenyltetrahydrofolate + NADPH. It carries out the reaction (6R)-5,10-methenyltetrahydrofolate + H2O = (6R)-10-formyltetrahydrofolate + H(+). It participates in one-carbon metabolism; tetrahydrofolate interconversion. Catalyzes the oxidation of 5,10-methylenetetrahydrofolate to 5,10-methenyltetrahydrofolate and then the hydrolysis of 5,10-methenyltetrahydrofolate to 10-formyltetrahydrofolate. The polypeptide is Bifunctional protein FolD (Vibrio parahaemolyticus serotype O3:K6 (strain RIMD 2210633)).